The primary structure comprises 103 residues: Large ribosomal subunit protein bL21 (103 aa).

This sequence belongs to the bacterial ribosomal protein bL21 family. Part of the 50S ribosomal subunit. Contacts protein L20.

In terms of biological role, this protein binds to 23S rRNA in the presence of protein L20. This is Large ribosomal subunit protein bL21 from Borreliella afzelii (strain PKo) (Borrelia afzelii).